The chain runs to 142 residues: Putative pre-16S rRNA nuclease (142 aa).

Belongs to the YqgF nuclease family.

It is found in the cytoplasm. In terms of biological role, could be a nuclease involved in processing of the 5'-end of pre-16S rRNA. This chain is Putative pre-16S rRNA nuclease, found in Chlorobaculum tepidum (strain ATCC 49652 / DSM 12025 / NBRC 103806 / TLS) (Chlorobium tepidum).